The sequence spans 20 residues: NEQSGKSQTVIVGSWGAKVS.

The segment covering 1 to 11 (NEQSGKSQTVI) has biased composition (polar residues). Positions 1-20 (NEQSGKSQTVIVGSWGAKVS) are disordered.

This sequence belongs to the jacalin lectin family. In terms of assembly, tetramer of four alpha chains associated with two or four beta chains.

Its function is as follows. D-galactose-specific lectin, binds the T-antigen structure Gal-beta1,3-GalNAc (Thomsen-Friedenreich-antigen-specific lectin). Potent and selective stimulant of distinct T- and B-cell functions. Shows a unique ability to specifically recognize IgA-1 from human serum. The protein is Agglutinin beta-1 chain of Artocarpus integer (Jack fruit).